The following is a 250-amino-acid chain: 1-(5-phosphoribosyl)-5-[(5-phosphoribosylamino)methylideneamino] imidazole-4-carboxamide isomerase (250 aa).

Catalysis depends on aspartate 7, which acts as the Proton acceptor. Aspartate 129 serves as the catalytic Proton donor.

It belongs to the HisA/HisF family.

The protein resides in the cytoplasm. The catalysed reaction is 1-(5-phospho-beta-D-ribosyl)-5-[(5-phospho-beta-D-ribosylamino)methylideneamino]imidazole-4-carboxamide = 5-[(5-phospho-1-deoxy-D-ribulos-1-ylimino)methylamino]-1-(5-phospho-beta-D-ribosyl)imidazole-4-carboxamide. It participates in amino-acid biosynthesis; L-histidine biosynthesis; L-histidine from 5-phospho-alpha-D-ribose 1-diphosphate: step 4/9. The sequence is that of 1-(5-phosphoribosyl)-5-[(5-phosphoribosylamino)methylideneamino] imidazole-4-carboxamide isomerase from Shewanella denitrificans (strain OS217 / ATCC BAA-1090 / DSM 15013).